We begin with the raw amino-acid sequence, 434 residues long: Chaperone SurA (434 aa).

The N-terminal stretch at 1-22 (MKPSKHLIFALFALAISQPTMA) is a signal peptide. PpiC domains lie at 173–274 (DVEY…KIMD) and 283–383 (IEEV…QLEE).

Its subcellular location is the periplasm. The catalysed reaction is [protein]-peptidylproline (omega=180) = [protein]-peptidylproline (omega=0). In terms of biological role, chaperone involved in the correct folding and assembly of outer membrane proteins. Recognizes specific patterns of aromatic residues and the orientation of their side chains, which are found more frequently in integral outer membrane proteins. May act in both early periplasmic and late outer membrane-associated steps of protein maturation. The polypeptide is Chaperone SurA (Shewanella sp. (strain MR-4)).